The chain runs to 381 residues: E3 ubiquitin-protein ligase RNF13 (381 aa).

The N-terminal stretch at 1–34 is a signal peptide; that stretch reads MLLSIGMLMLSATQIYTIVTVQLFAFLNLLPVEA. The Lumenal portion of the chain corresponds to 35–182; it reads DILAYNFENG…IPEFSLPLEY (148 aa). Positions 64–160 constitute a PA domain; that stretch reads LKGFLINSKP…GEASANSLKE (97 aa). N-linked (GlcNAc...) asparagine glycosylation is present at asparagine 88. Residues 183 to 203 traverse the membrane as a helical segment; sequence YLIPFLIIVGICLILIVIFMI. Topologically, residues 204 to 381 are cytoplasmic; sequence TKFVQDRHRA…ERDYRVTNTV (178 aa). The RING-type; atypical zinc-finger motif lies at 240–282; that stretch reads CAICLDEYEDGDKLRILPCSHAYHCKCVDPWLTKTKKTCPVCK. The interval 285-381 is disordered; that stretch reads VVPSQGDSDS…ERDYRVTNTV (97 aa). Composition is skewed to acidic residues over residues 292–305 and 339–353; these read SDSE…ENEV and SEYE…DSSD. A compositionally biased stretch (basic and acidic residues) spans 370–381; the sequence is NDERDYRVTNTV.

As to expression, widely expressed (at protein level). Lowest levels in the liver, moderate levels in the heart, intestine and spleen, and high levels in skeletal muscle, kidney, proventriculus and brain. Also expressed in inner ear after noise exposure.

The protein resides in the endoplasmic reticulum membrane. The protein localises to the late endosome membrane. It is found in the lysosome membrane. It localises to the nucleus inner membrane. It catalyses the reaction S-ubiquitinyl-[E2 ubiquitin-conjugating enzyme]-L-cysteine + [acceptor protein]-L-lysine = [E2 ubiquitin-conjugating enzyme]-L-cysteine + N(6)-ubiquitinyl-[acceptor protein]-L-lysine.. The protein operates within protein modification; protein ubiquitination. E3 ubiquitin-protein ligase that regulates cell proliferation. Involved in apoptosis regulation. Mediates ER stress-induced activation of JNK signaling pathway and apoptosis by promoting ERN1 activation and splicing of XBP1 mRNA. The sequence is that of E3 ubiquitin-protein ligase RNF13 from Gallus gallus (Chicken).